Consider the following 205-residue polypeptide: Urease accessory protein UreG (205 aa).

10-17 (GPVGAGKT) provides a ligand contact to GTP.

This sequence belongs to the SIMIBI class G3E GTPase family. UreG subfamily. As to quaternary structure, homodimer. UreD, UreF and UreG form a complex that acts as a GTP-hydrolysis-dependent molecular chaperone, activating the urease apoprotein by helping to assemble the nickel containing metallocenter of UreC. The UreE protein probably delivers the nickel.

Its subcellular location is the cytoplasm. Its function is as follows. Facilitates the functional incorporation of the urease nickel metallocenter. This process requires GTP hydrolysis, probably effectuated by UreG. This chain is Urease accessory protein UreG, found in Corynebacterium glutamicum (strain ATCC 13032 / DSM 20300 / JCM 1318 / BCRC 11384 / CCUG 27702 / LMG 3730 / NBRC 12168 / NCIMB 10025 / NRRL B-2784 / 534).